A 116-amino-acid polypeptide reads, in one-letter code: Putative iron-sulfur cluster insertion protein ErpA (116 aa).

Residues Cys44, Cys108, and Cys110 each contribute to the iron-sulfur cluster site.

It belongs to the HesB/IscA family. Homodimer. Iron-sulfur cluster serves as cofactor.

Functionally, required for insertion of 4Fe-4S clusters. In Janthinobacterium sp. (strain Marseille) (Minibacterium massiliensis), this protein is Putative iron-sulfur cluster insertion protein ErpA.